The primary structure comprises 272 residues: MVEYWTLDRFEIGRLLGRGKFGQVWLAREREKGFIVALKIIPIKEIQTVETARQIRREIEIHSNLKHPNILRMYGHFHDKDNIYLILEYAGKGEFFKFLSDRGGKFGEKETSLYIRQVMLALTYMKECNVIHRDIKPENLLLGSDNQLKIADFGWAVYNADKRRMTFCGTMEYLAPEMVNNDIHDSGIDLWCLGILTYEFLMGKTPFESKNRNMREAYKKINSLKYTIPETISSNASDFISRLLVLSPGDRMELTEALNHPFIVKHHGRSSD.

The 254-residue stretch at 10-263 (FEIGRLLGRG…LTEALNHPFI (254 aa)) folds into the Protein kinase domain. ATP is bound by residues 16 to 24 (LGRGKFGQV) and lysine 39. The active-site Proton acceptor is aspartate 134.

Belongs to the protein kinase superfamily. Ser/Thr protein kinase family. Aurora subfamily.

Its subcellular location is the nucleus. The protein resides in the cytoplasm. It localises to the cytoskeleton. The protein localises to the spindle. It is found in the chromosome. Its subcellular location is the centromere. The protein resides in the kinetochore. It catalyses the reaction L-seryl-[protein] + ATP = O-phospho-L-seryl-[protein] + ADP + H(+). The catalysed reaction is L-threonyl-[protein] + ATP = O-phospho-L-threonyl-[protein] + ADP + H(+). Component of the chromosomal passenger complex (CPC), a complex that acts as a key regulator of chromosome segregation and cytokinesis. Has a role in error-correction of aberrent kinetochore-microtubule attachments to ensure that sister kinetochores become bioriented and connect to opposite poles by promoting spindle assembly checkpoint signaling. This chain is Aurora kinase (IPL1), found in Encephalitozoon cuniculi (strain GB-M1) (Microsporidian parasite).